Here is a 477-residue protein sequence, read N- to C-terminus: Putative WAS protein family homolog 4 (477 aa).

Positions 1–180 are WHD1; it reads MSGVMCLKAS…EGLGGLPSNI (180 aa). Disordered regions lie at residues 310–420 and 434–477; these read QDGV…QGGH and KGIS…DWES. A compositionally biased stretch (pro residues) spans 315 to 327; that stretch reads TPPPPPPPPPPAP. The tract at residues 362 to 477 is VCA; it reads QGAPREVVDP…QAEDEDDWES (116 aa). The WH2 domain maps to 374-396; that stretch reads GWATLLESIRQAGGIGKAKLRSM. The segment covering 395-411 has biased composition (basic and acidic residues); that stretch reads SMKERKLEKQQQKEQEQ. Residues 437 to 449 are compositionally biased toward gly residues; the sequence is SGKGPGAGDGPGG.

This sequence belongs to the WASH1 family. Interacts (via WHD1 region) with WASHC2C; the interaction is direct.

It localises to the early endosome membrane. The protein resides in the recycling endosome membrane. In terms of biological role, may act as a nucleation-promoting factor at the surface of endosomes, where it recruits and activates the Arp2/3 complex to induce actin polymerization, playing a key role in the fission of tubules that serve as transport intermediates during endosome sorting. This chain is Putative WAS protein family homolog 4 (WASH4P), found in Homo sapiens (Human).